Consider the following 161-residue polypeptide: Spermidine N(1)-acetyltransferase (161 aa).

In terms of domain architecture, N-acetyltransferase spans 3–160; that stretch reads IEIRKLSIED…SDFIMEKKYE (158 aa). Acetyl-CoA contacts are provided by residues 92-94, 99-104, N131, and S136; these read LYL and THKKIG. Residue Y138 is the Proton donor of the active site. Residue K140 participates in acetyl-CoA binding.

It belongs to the acetyltransferase family. Monomer or homodimer.

It catalyses the reaction an alkane-alpha,omega-diamine + acetyl-CoA = an N-acetylalkane-alpha,omega-diamine + CoA + H(+). In terms of biological role, involved in the protection against polyamine toxicity by regulating their concentration. Could also be involved in the negative control of sporulation as well as production of degradative enzymes such as alpha-amylase, levansucrase and alkaline phosphatase. Catalyzes the transfer of an acetyl group from acetyl coenzyme A (AcCoA) to an acceptor substrate and release both CoA and the acetylated product. It can use a variety of substrates including spermidine, L-tryptophan, L-leucine, L-lysine, dopamine and tyramine. This Thermoplasma acidophilum (strain ATCC 25905 / DSM 1728 / JCM 9062 / NBRC 15155 / AMRC-C165) protein is Spermidine N(1)-acetyltransferase.